The following is a 995-amino-acid chain: Integrator complex subunit 8 (995 aa).

Phosphothreonine is present on Thr-18. The WFEF motif motif lies at 24-29; that stretch reads WFEFLL. TPR repeat units follow at residues 250-288, 320-356, 570-603, and 833-866; these read CQVCYDLGAAYFQQGSTNSAVYENAREKFFRTKELIAEI, SQQLTPYSQVHICLRSGNYQEVIQIFIEDNLTLSLPV, VYILMAKGLHCSTVKDFSHAKQLFAACLELVTEF, and HSWLIIQADIYFATNQYSAALHYYLQAGAVCSDF.

This sequence belongs to the Integrator subunit 8 family. Component of the Integrator complex, composed of core subunits INTS1, INTS2, INTS3, INTS4, INTS5, INTS6, INTS7, INTS8, INTS9/RC74, INTS10, INTS11/CPSF3L, INTS12, INTS13, INTS14 and INTS15. The core complex associates with protein phosphatase 2A subunits PPP2CA and PPP2R1A, to form the Integrator-PP2A (INTAC) complex.

The protein resides in the nucleus. It is found in the chromosome. Component of the integrator complex, a multiprotein complex that terminates RNA polymerase II (Pol II) transcription in the promoter-proximal region of genes. The integrator complex provides a quality checkpoint during transcription elongation by driving premature transcription termination of transcripts that are unfavorably configured for transcriptional elongation: the complex terminates transcription by (1) catalyzing dephosphorylation of the C-terminal domain (CTD) of Pol II subunit POLR2A/RPB1 and SUPT5H/SPT5, (2) degrading the exiting nascent RNA transcript via endonuclease activity and (3) promoting the release of Pol II from bound DNA. The integrator complex is also involved in terminating the synthesis of non-coding Pol II transcripts, such as enhancer RNAs (eRNAs), small nuclear RNAs (snRNAs), telomerase RNAs and long non-coding RNAs (lncRNAs). Within the integrator complex, INTS8 is required for the recruitment of protein phosphatase 2A (PP2A) to transcription pause-release checkpoint. This is Integrator complex subunit 8 from Homo sapiens (Human).